The following is a 286-amino-acid chain: Phosphatidylserine decarboxylase proenzyme (286 aa).

Catalysis depends on charge relay system; for autoendoproteolytic cleavage activity residues aspartate 88, histidine 145, and serine 251. The active-site Schiff-base intermediate with substrate; via pyruvic acid; for decarboxylase activity is serine 251. Serine 251 is modified (pyruvic acid (Ser); by autocatalysis).

The protein belongs to the phosphatidylserine decarboxylase family. PSD-B subfamily. Prokaryotic type I sub-subfamily. As to quaternary structure, heterodimer of a large membrane-associated beta subunit and a small pyruvoyl-containing alpha subunit. Requires pyruvate as cofactor. Post-translationally, is synthesized initially as an inactive proenzyme. Formation of the active enzyme involves a self-maturation process in which the active site pyruvoyl group is generated from an internal serine residue via an autocatalytic post-translational modification. Two non-identical subunits are generated from the proenzyme in this reaction, and the pyruvate is formed at the N-terminus of the alpha chain, which is derived from the carboxyl end of the proenzyme. The autoendoproteolytic cleavage occurs by a canonical serine protease mechanism, in which the side chain hydroxyl group of the serine supplies its oxygen atom to form the C-terminus of the beta chain, while the remainder of the serine residue undergoes an oxidative deamination to produce ammonia and the pyruvoyl prosthetic group on the alpha chain. During this reaction, the Ser that is part of the protease active site of the proenzyme becomes the pyruvoyl prosthetic group, which constitutes an essential element of the active site of the mature decarboxylase.

Its subcellular location is the cell membrane. The catalysed reaction is a 1,2-diacyl-sn-glycero-3-phospho-L-serine + H(+) = a 1,2-diacyl-sn-glycero-3-phosphoethanolamine + CO2. Its pathway is phospholipid metabolism; phosphatidylethanolamine biosynthesis; phosphatidylethanolamine from CDP-diacylglycerol: step 2/2. Catalyzes the formation of phosphatidylethanolamine (PtdEtn) from phosphatidylserine (PtdSer). This Verminephrobacter eiseniae (strain EF01-2) protein is Phosphatidylserine decarboxylase proenzyme.